The primary structure comprises 374 residues: Phenoloxidase-activating enzyme 1 (374 aa).

The N-terminal stretch at 1–19 (MWKSLVFFVSALIWSFGSS) is a signal peptide. The propeptide at 20–120 (QDCTTPTGSR…QCGIDTTGDR (101 aa)) is activation peptide. Residues 21–74 (DCTTPTGSRSNCVSLYQCQPLYNAFEQRPLPTHVVSYLGRSQCGFEGYVPRVCC) form the Clip domain. Cystine bridges form between C22/C73, C32/C63, and C38/C74. Positions 83 to 97 (ATSARPTQAPTQGSS) are enriched in polar residues. The disordered stretch occupies residues 83–114 (ATSARPTQAPTQGSSDVFPEDSSPAPRNQCGI). Residues 121 to 370 (VYGGTITDLD…YIDWIQNTIA (250 aa)) enclose the Peptidase S1 domain. Cysteines 151 and 167 form a disulfide. The active-site Charge relay system is the H166. Positions 186 and 194 each coordinate Ca(2+). Catalysis depends on D228, which acts as the Charge relay system. 2 disulfides stabilise this stretch: C292/C307 and C317/C346. Catalysis depends on S321, which acts as the Charge relay system.

Belongs to the peptidase S1 family. CLIP subfamily. In terms of processing, activated by the removal of the N-terminal inhibitory propeptide. As to expression, expressed in hemocytes.

It localises to the secreted. With respect to regulation, inhibited by aprotenin. Not inhibited by EDTA, PMSF or leupeptin. Serine protease which, by cleaving and activating prophenoloxidase (PPO1) after immune challenge, plays an essential role in the melanization immune response to wounding. This is Phenoloxidase-activating enzyme 1 from Spodoptera litura (Asian cotton leafworm).